The chain runs to 193 residues: Protein GrpE (193 aa).

Positions 1–40 (MTEENRPQPDQPELTVTSESSVQETGENKARTPEQEGEAM) are disordered. Polar residues predominate over residues 14–25 (LTVTSESSVQET).

The protein belongs to the GrpE family. As to quaternary structure, homodimer.

It is found in the cytoplasm. Functionally, participates actively in the response to hyperosmotic and heat shock by preventing the aggregation of stress-denatured proteins, in association with DnaK and GrpE. It is the nucleotide exchange factor for DnaK and may function as a thermosensor. Unfolded proteins bind initially to DnaJ; upon interaction with the DnaJ-bound protein, DnaK hydrolyzes its bound ATP, resulting in the formation of a stable complex. GrpE releases ADP from DnaK; ATP binding to DnaK triggers the release of the substrate protein, thus completing the reaction cycle. Several rounds of ATP-dependent interactions between DnaJ, DnaK and GrpE are required for fully efficient folding. The protein is Protein GrpE of Nitrosospira multiformis (strain ATCC 25196 / NCIMB 11849 / C 71).